The primary structure comprises 435 residues: Nucleoredoxin (435 aa).

At Ser-2 the chain carries N-acetylserine. The Thioredoxin domain occupies 167–321; the sequence is PKPFREVIAG…VLELSDSNAV (155 aa).

Belongs to the nucleoredoxin family. As to quaternary structure, associates with the phosphatase 2A holoenzyme. Interacts with PPP2CA; the interaction is direct. Interacts with DVL1 (via PDZ domain); the interaction is direct and regulated by oxidative stress.

Its subcellular location is the cytoplasm. The protein localises to the cytosol. It is found in the nucleus. The enzyme catalyses [protein]-dithiol + NAD(+) = [protein]-disulfide + NADH + H(+). The catalysed reaction is [protein]-dithiol + NADP(+) = [protein]-disulfide + NADPH + H(+). In terms of biological role, functions as a redox-dependent negative regulator of the Wnt signaling pathway, possibly by preventing ubiquitination of DVL3 by the BCR(KLHL12) complex. May also function as a transcriptional regulator act as a regulator of protein phosphatase 2A (PP2A). The chain is Nucleoredoxin (NXN) from Bos taurus (Bovine).